We begin with the raw amino-acid sequence, 495 residues long: Putative aldehyde dehydrogenase AldA (495 aa).

212–218 contacts NAD(+); sequence GKGSESG. Catalysis depends on residues Glu256 and Cys290.

The protein belongs to the aldehyde dehydrogenase family.

It carries out the reaction an aldehyde + NAD(+) + H2O = a carboxylate + NADH + 2 H(+). This Staphylococcus aureus (strain Mu50 / ATCC 700699) protein is Putative aldehyde dehydrogenase AldA (aldA).